Reading from the N-terminus, the 376-residue chain is Secreted LysM effector LysM9 (376 aa).

A signal peptide spans 1–25 (MGHFHLSNFIALIGILLVGPTATSG). The region spanning 41-89 (SKYVVQAGETCSAIAQAHSITTADIETYNAQSWAWTGCGQISQGDFICL) is the LysM domain. A disordered region spans residues 190–219 (SSETSSSMTTSTSATTSVPTTTSTTTTTKT).

This sequence belongs to the secreted LysM effector family.

The protein resides in the secreted. Secreted LysM effector that might have a role in sequestration of chitin oligosaccharides (breakdown products of fungal cell walls that are released during invasion and act as triggers of host immunity) to dampen host defense. The chain is Secreted LysM effector LysM9 from Penicillium expansum (Blue mold rot fungus).